A 567-amino-acid chain; its full sequence is Dihydroxy-acid dehydratase (567 aa).

Cys52 lines the [2Fe-2S] cluster pocket. Asp84 contributes to the Mg(2+) binding site. Cys125 provides a ligand contact to [2Fe-2S] cluster. Asp126 and Lys127 together coordinate Mg(2+). Residue Lys127 is modified to N6-carboxylysine. Residue Cys197 participates in [2Fe-2S] cluster binding. Glu448 provides a ligand contact to Mg(2+). Residue Ser474 is the Proton acceptor of the active site.

This sequence belongs to the IlvD/Edd family. As to quaternary structure, homodimer. [2Fe-2S] cluster is required as a cofactor. It depends on Mg(2+) as a cofactor.

The catalysed reaction is (2R)-2,3-dihydroxy-3-methylbutanoate = 3-methyl-2-oxobutanoate + H2O. It catalyses the reaction (2R,3R)-2,3-dihydroxy-3-methylpentanoate = (S)-3-methyl-2-oxopentanoate + H2O. It participates in amino-acid biosynthesis; L-isoleucine biosynthesis; L-isoleucine from 2-oxobutanoate: step 3/4. It functions in the pathway amino-acid biosynthesis; L-valine biosynthesis; L-valine from pyruvate: step 3/4. Functions in the biosynthesis of branched-chain amino acids. Catalyzes the dehydration of (2R,3R)-2,3-dihydroxy-3-methylpentanoate (2,3-dihydroxy-3-methylvalerate) into 2-oxo-3-methylpentanoate (2-oxo-3-methylvalerate) and of (2R)-2,3-dihydroxy-3-methylbutanoate (2,3-dihydroxyisovalerate) into 2-oxo-3-methylbutanoate (2-oxoisovalerate), the penultimate precursor to L-isoleucine and L-valine, respectively. In Streptococcus pneumoniae (strain CGSP14), this protein is Dihydroxy-acid dehydratase.